Reading from the N-terminus, the 609-residue chain is Proteasome-associated ATPase (609 aa).

Positions Met1 to Glu27 are disordered. Residues Asp17–Gln96 are a coiled coil. Gly296–Leu301 lines the ATP pocket. Residues Tyr608–Leu609 form a docks into pockets in the proteasome alpha-ring region.

It belongs to the AAA ATPase family. Homohexamer. Assembles into a hexameric ring structure that caps the 20S proteasome core. Strongly interacts with the prokaryotic ubiquitin-like protein Pup through a hydrophobic interface; the interacting region of ARC lies in its N-terminal coiled-coil domain. There is one Pup binding site per ARC hexamer ring. Upon ATP-binding, the C-terminus of ARC interacts with the alpha-rings of the proteasome core, possibly by binding to the intersubunit pockets.

It functions in the pathway protein degradation; proteasomal Pup-dependent pathway. Its function is as follows. ATPase which is responsible for recognizing, binding, unfolding and translocation of pupylated proteins into the bacterial 20S proteasome core particle. May be essential for opening the gate of the 20S proteasome via an interaction with its C-terminus, thereby allowing substrate entry and access to the site of proteolysis. Thus, the C-termini of the proteasomal ATPase may function like a 'key in a lock' to induce gate opening and therefore regulate proteolysis. This Mycobacterium avium (strain 104) protein is Proteasome-associated ATPase.